A 263-amino-acid chain; its full sequence is H-2 class II histocompatibility antigen, A-S beta chain (263 aa).

The signal sequence occupies residues 1–27 (MALQIPSLLLSAAVVVLMVLSSPGTEG). Residues 28–120 (GDSERHFVFQ…VETHTSLRRL (93 aa)) are beta-1. Residues 28–224 (GDSERHFVFQ…RAQSESARSK (197 aa)) are Extracellular-facing. Intrachain disulfides connect cysteine 42–cysteine 104 and cysteine 143–cysteine 199. N-linked (GlcNAc...) asparagine glycosylation is present at asparagine 46. A beta-2 region spans residues 121-214 (EQPNVVISLS…SLKSPITVEW (94 aa)). In terms of domain architecture, Ig-like C1-type spans 123–211 (PNVVISLSRT…EHPSLKSPIT (89 aa)). Positions 215-224 (RAQSESARSK) are connecting peptide. Residues 225-245 (MLSGIGGCVLGVIFLGLGLFI) form a helical membrane-spanning segment. Residues 246–263 (RHRSQKGPRGPPPAGLLQ) are Cytoplasmic-facing.

It belongs to the MHC class II family. In terms of processing, ubiquitinated in immature dendritic cells leading to down-regulation of MHC class II.

Its subcellular location is the membrane. This chain is H-2 class II histocompatibility antigen, A-S beta chain (H2-Ab1), found in Mus musculus (Mouse).